The following is a 228-amino-acid chain: NAD(P)H-hydrate epimerase (228 aa).

Residues 9 to 209 enclose the YjeF N-terminal domain; that stretch reads VRAVERLAHR…LLGLTPAFLA (201 aa). Position 53 to 57 (53 to 57) interacts with (6S)-NADPHX; sequence NNGGD. Positions 54 and 115 each coordinate K(+). Residues 119–125 and D148 contribute to the (6S)-NADPHX site; that span reads GIGLARP. K(+) is bound at residue S151.

This sequence belongs to the NnrE/AIBP family. Requires K(+) as cofactor.

It carries out the reaction (6R)-NADHX = (6S)-NADHX. The enzyme catalyses (6R)-NADPHX = (6S)-NADPHX. Catalyzes the epimerization of the S- and R-forms of NAD(P)HX, a damaged form of NAD(P)H that is a result of enzymatic or heat-dependent hydration. This is a prerequisite for the S-specific NAD(P)H-hydrate dehydratase to allow the repair of both epimers of NAD(P)HX. The chain is NAD(P)H-hydrate epimerase from Bordetella parapertussis (strain 12822 / ATCC BAA-587 / NCTC 13253).